A 142-amino-acid chain; its full sequence is Transcriptional regulator MraZ (142 aa).

SpoVT-AbrB domains follow at residues alanine 5–glutamate 51 and alanine 77–threonine 120.

It belongs to the MraZ family. In terms of assembly, forms oligomers.

Its subcellular location is the cytoplasm. It is found in the nucleoid. The protein is Transcriptional regulator MraZ of Burkholderia mallei (strain NCTC 10247).